We begin with the raw amino-acid sequence, 296 residues long: Protein FAM221A (296 aa).

Residues M235 to D263 are disordered. Positions P237 to S256 are enriched in polar residues.

The protein belongs to the FAM221 family.

The protein is Protein FAM221A (Fam221a) of Rattus norvegicus (Rat).